The primary structure comprises 177 residues: uncharacterized protein (177 aa).

The first 22 residues, 1 to 22, serve as a signal peptide directing secretion; the sequence is MCGVVVVIVALVPADPLLPAFA. 3 helical membrane passes run 31-51, 94-114, and 136-156; these read VFIPFFNISSSIILICSTCVF, ISLMPSFLFPFATLLCLLKFV, and LFPIMLIPPPFLTSSSFLLEI.

The protein localises to the membrane. This is an uncharacterized protein from Saccharomyces cerevisiae (strain ATCC 204508 / S288c) (Baker's yeast).